A 794-amino-acid chain; its full sequence is Protein sel-1 homolog 1 (794 aa).

The N-terminal stretch at 1–21 (MQVHVGLTLLLCAVLLSSATA) is a signal peptide. Residues 20–91 (TASSDDESNQ…EEEVSVGEEI (72 aa)) are disordered. The interaction with ERLEC1, OS9 and SYVN1 stretch occupies residues 22–737 (SSDDESNQDE…DIFTQLDMDQ (716 aa)). Residues 22–738 (SSDDESNQDE…IFTQLDMDQL (717 aa)) lie on the Lumenal side of the membrane. 2 stretches are compositionally biased toward acidic residues: residues 23 to 32 (SDDESNQDES) and 62 to 77 (DSED…EEEE). Position 63 is a phosphoserine (S63). One can recognise a Fibronectin type-II domain in the interval 122-170 (AHGEPCHFPFLFLDKEYDECTSDGRQDGRLWCATTYDYKTDEKWGFCET). 2 disulfides stabilise this stretch: C127/C153 and C141/C168. Sel1-like repeat units follow at residues 183 to 218 (AEMI…GMNH), 219 to 254 (TKAL…EEGS), 255 to 290 (PKGQ…LGGN), 291 to 326 (LIAH…NHVA), 373 to 409 (VQAQ…NAGN), 410 to 446 (SHAM…DMGN), 447 to 482 (PVGQ…EQGW), 483 to 518 (VDGQ…QGGH), and 519 to 554 (ILAF…ERGR). N-linked (GlcNAc...) asparagine glycosylation is found at N195 and N217. A glycan (N-linked (GlcNAc...) asparagine) is linked at N272. An important for homodimerization and oligomerization region spans residues 352–537 (NSGMLEEDLI…MHASGTGVMR (186 aa)). N431 is a glycosylation site (N-linked (GlcNAc...) asparagine). N608 is a glycosylation site (N-linked (GlcNAc...) asparagine). Sel1-like repeat units lie at residues 627–662 (TVAR…EQQH) and 664–699 (AQAM…EASP). Residues 643–723 (TDVDYETAFI…VVYFLQYIRE (81 aa)) are interaction with SYVN1. The tract at residues 738 to 794 (LLGPEWDLYLMTIIALLLGTVIAYRQRQHQDVPVPRPPGPWPAPPQQEGPPEQQPPQ) is mediates retention in the endoplasmic reticulum. Residues 739-759 (LGPEWDLYLMTIIALLLGTVI) traverse the membrane as a helical segment. Over 760–794 (AYRQRQHQDVPVPRPPGPWPAPPQQEGPPEQQPPQ) the chain is Cytoplasmic. A disordered region spans residues 768-794 (DVPVPRPPGPWPAPPQQEGPPEQQPPQ). A compositionally biased stretch (pro residues) spans 771–794 (VPRPPGPWPAPPQQEGPPEQQPPQ).

The protein belongs to the sel-1 family. Homodimer and homooligomer. May form a complex with ERLEC1, HSPA5, OS9, and SYVN1. Interacts with FOXRED2 and EDEM1. Interacts with LPL and LMF1; may stabilize the complex formed by LPL and LMF1 and thereby promote the export of LPL dimers. Component of the HRD1 complex, which comprises at least SYNV1/HRD1, DERL1/2, FAM8A1, HERPUD1/HERP, OS9, SEL1L and UBE2J1. SYNV1 assembles with SEL1L and FAM8A1 through its transmembrane domains, but interaction with its cytoplasmic domain is required to confer stability to FAM8A1 and enhance recruitment of HERPUD1. The interaction with SYNV1/HRD1 is direct. In terms of processing, N-glycosylated.

It is found in the endoplasmic reticulum membrane. Functionally, plays a role in the endoplasmic reticulum quality control (ERQC) system also called ER-associated degradation (ERAD) involved in ubiquitin-dependent degradation of misfolded endoplasmic reticulum proteins. Enhances SYVN1 stability. Plays a role in LPL maturation and secretion. Required for normal differentiation of the pancreas epithelium, and for normal exocrine function and survival of pancreatic cells. May play a role in Notch signaling. This is Protein sel-1 homolog 1 (Sel1l) from Mesocricetus auratus (Golden hamster).